Here is a 121-residue protein sequence, read N- to C-terminus: Probable tail terminator protein (121 aa).

The protein belongs to the Skunalikevirus tail terminator protein family. As to quaternary structure, homohexamer. Interacts with the tail tube protein.

It is found in the virion. Functionally, plays an essential role in tail assembly by capping the rapidly polymerizing tail once it has reached its requisite length and serving as the interaction surface for the connector and the tail tube proteins. In Lactococcus lactis (Lactococcus lactis bacteriophage p2), this protein is Probable tail terminator protein.